A 445-amino-acid polypeptide reads, in one-letter code: AVMGRNLALNIESRGYTVSVFNRSREKTEEVVAENPGKKLVPYYTVQEFVESLETPRRILLMVQAGAGTDAAINSLKPYLDKGDIIIDGGNTFFHDTIRRNRELSAEGFNFIGTGVSGGEEGALKGPSIMPGGQKEAYELVAPILTKIAAVAEDGEPCVTYIGADGAGHYVKMVHNGIEYGDMQLIAEAYSLLKGGLNLSNEELAQTFTEWNKGELSSYLIDITKDIFTKKDEEGKYLVDVILDEAANKGTGKWTSQSSLDLGEPLSLITESVFARYISSLKEQRVAASKVLSGPQSQPAGDKAEFIEKVRRALYLGKIVSYAQGFSQLRAASEEYNWDLNYGEIAKIFRAGCIIRAQFLQKITDAYAETPAIANLLLAPYFKQIADDYQQALRDVVAYAVQNGIPVPTFGAAVAYYDSYRAAVLPANLIQAQRDYFGAHTYKRT.

NADP(+) contacts are provided by residues 1–4 (AVMG), 22–24 (NRS), 63–65 (VQA), and Asn91. Residues Asn91 and 117-119 (SGG) each bind substrate. The Proton acceptor role is filled by Lys172. Position 175-176 (175-176 (HN)) interacts with substrate. Glu179 serves as the catalytic Proton donor. Positions 180, 249, 276, 434, and 440 each coordinate substrate.

This sequence belongs to the 6-phosphogluconate dehydrogenase family. As to quaternary structure, homodimer.

It carries out the reaction 6-phospho-D-gluconate + NADP(+) = D-ribulose 5-phosphate + CO2 + NADPH. Its pathway is carbohydrate degradation; pentose phosphate pathway; D-ribulose 5-phosphate from D-glucose 6-phosphate (oxidative stage): step 3/3. Functionally, catalyzes the oxidative decarboxylation of 6-phosphogluconate to ribulose 5-phosphate and CO(2), with concomitant reduction of NADP to NADPH. This Pseudescherichia vulneris (Escherichia vulneris) protein is 6-phosphogluconate dehydrogenase, decarboxylating (gnd).